Reading from the N-terminus, the 183-residue chain is I-kappa-B like protein N2 (183 aa).

2 ANK repeats span residues 62 to 95 and 99 to 129; these read DGNTCLHEAALRNKGPQAIRIMEKLIEYGADLNL and CHKPVLHVAVERNDYELVAWICQQPGINLEA. Positions 163–183 are disordered; the sequence is PRQDGSSEDEVSDSEEKSDSE.

Belongs to the polydnaviridae I-Kappa-B like protein family.

Functionally, suppresses the host immune response through NF-kappa-B inactivation. Possesses ankyrin repeat domains required for NF-kappa-B binding but lacks the regulatory regions required for dissociation from NF-kappa-B and degradation. Therefore, prevents host NF-kappa-B release and subsequent activation. This Microplitis demolitor (Parasitoid wasp) protein is I-kappa-B like protein N2 (N5).